A 123-amino-acid chain; its full sequence is Small ribosomal subunit protein uS12cz/uS12cy (123 aa).

Belongs to the universal ribosomal protein uS12 family. Part of the 30S ribosomal subunit.

The protein resides in the plastid. It is found in the chloroplast. With S4 and S5 plays an important role in translational accuracy. Located at the interface of the 30S and 50S subunits. The polypeptide is Small ribosomal subunit protein uS12cz/uS12cy (rps12-A) (Atropa belladonna (Belladonna)).